Reading from the N-terminus, the 483-residue chain is MKAFHTFCVVLLVFGSVSEAKFDDFEDEEDIVEYDDNDFAEFEDVMEDSVTESPQRVIITEDDEDETTVELEGQDENQEGDFEDADTQEGDTESEPYDDEEFEGYEDKPDTSSSKNKDPITIVDVPAHLQNSWESYYLEILMVTGLLAYIMNYIIGKNKNSRLAQAWFNTHRELLESNFTLVGDDGTNKEATSTGKLNQENEHIYNLWCSGRVCCEGMLIQLRFLKRQDLLNVLARMMRPVSDQVQIKVTMNDEDMDTYVFAVGTRKALVRLQKEMQDLSEFCSDKPKSGAKYGLPDSLAILSEMGEVTDGMMDTKMVHFLTHYADKIESVHFSDQFSGPKIMQEEGQPLKLPDTKRTLLFTFNVPGSGNTYPKDMEALLPLMNMVIYSIDKAKKFRLNREGKQKADKNRARVEENFLKLTHVQRQEAAQSRREEKKRAEKERIMNEEDPEKQRRLEEAALRREQKKLEKKQMKMKQIKVKAM.

Residues 1 to 20 (MKAFHTFCVVLLVFGSVSEA) form the signal peptide. Topologically, residues 21 to 135 (KFDDFEDEED…PAHLQNSWES (115 aa)) are cytoplasmic. The disordered stretch occupies residues 46 to 118 (MEDSVTESPQ…PDTSSSKNKD (73 aa)). Residues 60-104 (TEDDEDETTVELEGQDENQEGDFEDADTQEGDTESEPYDDEEFEG) show a composition bias toward acidic residues. Over residues 105–118 (YEDKPDTSSSKNKD) the composition is skewed to basic and acidic residues. A helical membrane pass occupies residues 136–155 (YYLEILMVTGLLAYIMNYII). At 156–483 (GKNKNSRLAQ…KMKQIKVKAM (328 aa)) the chain is on the lumenal side. A glycan (N-linked (GlcNAc...) asparagine) is linked at asparagine 178. Positions 424-483 (QRQEAAQSRREEKKRAEKERIMNEEDPEKQRRLEEAALRREQKKLEKKQMKMKQIKVKAM) are disordered. Residues 430–472 (QSRREEKKRAEKERIMNEEDPEKQRRLEEAALRREQKKLEKKQ) show a composition bias toward basic and acidic residues. Residues 450–483 (PEKQRRLEEAALRREQKKLEKKQMKMKQIKVKAM) adopt a coiled-coil conformation. Residues 473-483 (MKMKQIKVKAM) are compositionally biased toward basic residues.

Belongs to the CCDC47 family. In terms of assembly, component of the PAT complex, composed of WDR83OS/Asterix and CCDC47. The PAT complex is part of the multi-pass translocon (MPT) complex, composed of three subcomplexes, the GEL complex (composed of RAB5IF/OPTI and TMCO1), the BOS complex (composed of NCLN/Nicalin, NOMO and TMEM147) and the PAT complex (composed of WDR83OS/Asterix and CCDC47). The MPT complex associates with the SEC61 complex. Interacts with VCP, HSPA5, DERL1, DERL2 and SELENOS.

It localises to the endoplasmic reticulum membrane. Its subcellular location is the rough endoplasmic reticulum membrane. Its function is as follows. Component of the multi-pass translocon (MPT) complex that mediates insertion of multi-pass membrane proteins into the lipid bilayer of membranes. The MPT complex takes over after the SEC61 complex: following membrane insertion of the first few transmembrane segments of proteins by the SEC61 complex, the MPT complex occludes the lateral gate of the SEC61 complex to promote insertion of subsequent transmembrane regions. Within the MPT complex, the PAT subcomplex sequesters any highly polar regions in the transmembrane domains away from the non-polar membrane environment until they can be buried in the interior of the fully assembled protein. Within the PAT subcomplex, CCDC47 occludes the lateral gate of the SEC61 complex. Involved in the regulation of calcium ion homeostasis in the ER. Required for proper protein degradation via the ERAD (ER-associated degradation) pathway. Has an essential role in the maintenance of ER organization during embryogenesis. The polypeptide is PAT complex subunit CCDC47 (Homo sapiens (Human)).